The following is a 203-amino-acid chain: ATP-dependent Clp protease proteolytic subunit 2 (203 aa).

The active-site Nucleophile is the serine 97. Residue histidine 122 is part of the active site.

Belongs to the peptidase S14 family. As to quaternary structure, fourteen ClpP subunits assemble into 2 heptameric rings which stack back to back to give a disk-like structure with a central cavity, resembling the structure of eukaryotic proteasomes.

It localises to the cytoplasm. The enzyme catalyses Hydrolysis of proteins to small peptides in the presence of ATP and magnesium. alpha-casein is the usual test substrate. In the absence of ATP, only oligopeptides shorter than five residues are hydrolyzed (such as succinyl-Leu-Tyr-|-NHMec, and Leu-Tyr-Leu-|-Tyr-Trp, in which cleavage of the -Tyr-|-Leu- and -Tyr-|-Trp bonds also occurs).. Cleaves peptides in various proteins in a process that requires ATP hydrolysis. Has a chymotrypsin-like activity. Plays a major role in the degradation of misfolded proteins. The protein is ATP-dependent Clp protease proteolytic subunit 2 of Myxococcus xanthus (strain DK1622).